A 432-amino-acid chain; its full sequence is Homeobox protein Hox-D3 (432 aa).

Disordered regions lie at residues 43-62, 68-197, 253-280, and 400-432; these read YSTPHQPYPPPAAASSLDTD, CSIQ…SKRV, QKAKGILHSPASQSPERSPPLGGAAGHV, and HHGPCDPHPTYTDLSAHHSSQGRLPEAPKLTHL. Residues 97–106 are compositionally biased toward gly residues; that stretch reads NSQGGGGGSQ. The span at 116 to 131 shows a compositional bias: pro residues; that stretch reads PPQPPPPPPTLPPSSP. The span at 148–158 shows a compositional bias: polar residues; sequence NASSSSATISK. Positions 160–165 match the Antp-type hexapeptide motif; that stretch reads IFPWMK. The segment at residues 194–253 is a DNA-binding region (homeobox); the sequence is SKRVRTAYTSAQLVELEKEFHFNRYLCRPRRVEMANLLNLTERQIKIWFQNRRMKYKKDQ.

It belongs to the Antp homeobox family.

The protein resides in the nucleus. In terms of biological role, sequence-specific transcription factor which is part of a developmental regulatory system that provides cells with specific positional identities on the anterior-posterior axis. In Homo sapiens (Human), this protein is Homeobox protein Hox-D3 (HOXD3).